Reading from the N-terminus, the 645-residue chain is Envelope glycoprotein (645 aa).

Positions Met-1–Met-36 are cleaved as a signal peptide. Over Ala-37–Leu-589 the chain is Extracellular. N-linked (GlcNAc...) asparagine; by host glycosylation is found at Asn-46 and Asn-61. Intrachain disulfides connect Cys-128-Cys-150 and Cys-142-Cys-155. The tract at residues Gln-238–Ser-283 is disordered. Polar residues predominate over residues Pro-252–Arg-275. N-linked (GlcNAc...) asparagine; by host glycans are attached at residues Asn-270, Asn-305, and Asn-310. 3 disulfide bridges follow: Cys-315–Cys-318, Cys-315–Cys-542, and Cys-534–Cys-541. Residues Cys-315–Cys-318 carry the CXXC motif. N-linked (GlcNAc...) asparagine; by host glycans are attached at residues Asn-334, Asn-337, Asn-377, Asn-393, and Asn-413. Residues Ile-451–Val-471 form a fusion peptide region. Coiled-coil stretches lie at residues Leu-479 to Leu-528 and Lys-538 to Gly-574. The tract at residues Leu-517–Leu-533 is immunosuppression. The short motif at Cys-534–Cys-542 is the CX6CC element. A helical transmembrane segment spans residues Ile-590–Ile-610. Residue Cys-609 is the site of S-palmitoyl cysteine; by host attachment. At Leu-611–Pro-645 the chain is on the cytoplasmic side.

The mature envelope protein (Env) consists of a trimer of SU-TM heterodimers attached by a labile interchain disulfide bond. Post-translationally, specific enzymatic cleavages in vivo yield mature proteins. Envelope glycoproteins are synthesized as an inactive precursor that is N-glycosylated and processed likely by host cell furin or by a furin-like protease in the Golgi to yield the mature SU and TM proteins. The cleavage site between SU and TM requires the minimal sequence [KR]-X-[KR]-R. The R-peptide is released from the C-terminus of the cytoplasmic tail of the TM protein upon particle formation as a result of proteolytic cleavage by the viral protease. Cleavage of this peptide is required for TM to become fusogenic. In terms of processing, the CXXC motif is highly conserved across a broad range of retroviral envelope proteins. It is thought to participate in the formation of a labile disulfide bond possibly with the CX6CC motif present in the transmembrane protein. Isomerization of the intersubunit disulfide bond to an SU intrachain disulfide bond is thought to occur upon receptor recognition in order to allow membrane fusion. The transmembrane protein is palmitoylated. Post-translationally, the R-peptide is palmitoylated.

It localises to the virion membrane. The protein resides in the host cell membrane. Its function is as follows. The surface protein (SU) attaches the virus to the host cell by binding to its receptor. This interaction triggers the refolding of the transmembrane protein (TM) and is thought to activate its fusogenic potential by unmasking its fusion peptide. Fusion occurs at the host cell plasma membrane. In terms of biological role, the transmembrane protein (TM) acts as a class I viral fusion protein. Under the current model, the protein has at least 3 conformational states: pre-fusion native state, pre-hairpin intermediate state, and post-fusion hairpin state. During viral and target cell membrane fusion, the coiled coil regions (heptad repeats) assume a trimer-of-hairpins structure, positioning the fusion peptide in close proximity to the C-terminal region of the ectodomain. The formation of this structure appears to drive apposition and subsequent fusion of viral and target cell membranes. Membranes fusion leads to delivery of the nucleocapsid into the cytoplasm. This Feline sarcoma virus (strain SM) (Sm-FeSV) protein is Envelope glycoprotein (env).